The chain runs to 280 residues: Shikimate dehydrogenase (NADP(+)) (280 aa).

Residues 20 to 22 (SRS) and T67 each bind shikimate. The active-site Proton acceptor is K71. D82 lines the NADP(+) pocket. Residues N91 and D106 each coordinate shikimate. NADP(+)-binding positions include 131–135 (GAGGS) and L220. Shikimate is bound at residue Y222. Residue G243 participates in NADP(+) binding.

This sequence belongs to the shikimate dehydrogenase family. As to quaternary structure, homodimer.

The catalysed reaction is shikimate + NADP(+) = 3-dehydroshikimate + NADPH + H(+). It participates in metabolic intermediate biosynthesis; chorismate biosynthesis; chorismate from D-erythrose 4-phosphate and phosphoenolpyruvate: step 4/7. Functionally, involved in the biosynthesis of the chorismate, which leads to the biosynthesis of aromatic amino acids. Catalyzes the reversible NADPH linked reduction of 3-dehydroshikimate (DHSA) to yield shikimate (SA). The sequence is that of Shikimate dehydrogenase (NADP(+)) from Rhodopseudomonas palustris (strain HaA2).